A 111-amino-acid polypeptide reads, in one-letter code: Nucleoid-associated protein NGK_1136 (111 aa).

Belongs to the YbaB/EbfC family. As to quaternary structure, homodimer.

It localises to the cytoplasm. It is found in the nucleoid. Binds to DNA and alters its conformation. May be involved in regulation of gene expression, nucleoid organization and DNA protection. The protein is Nucleoid-associated protein NGK_1136 of Neisseria gonorrhoeae (strain NCCP11945).